A 44-amino-acid polypeptide reads, in one-letter code: DVCESVAGRCIHNGCWCERSAPHGNCCNTSGCTARWWCPGTKWD.

Cystine bridges form between Cys-3-Cys-15, Cys-10-Cys-27, Cys-17-Cys-32, and Cys-26-Cys-38. Trp-16 is subject to 6'-bromotryptophan. Pro-22 carries the post-translational modification 4-hydroxyproline. 6'-bromotryptophan occurs at positions 36 and 37. Pro-39 carries the 4-hydroxyproline modification. Position 43 is a 6'-bromotryptophan (Trp-43).

Expressed by the venom duct.

The protein localises to the secreted. Functionally, mu-conotoxins block voltage-gated sodium channels. This toxin reversibly blocks voltage-gated sodium channel in cephalopods, with no alteration in the voltage dependence of sodium conductance or on the kinetics of inactivation. The protein is Mu-conotoxin-like Cal 12.1.2f of Californiconus californicus (California cone).